We begin with the raw amino-acid sequence, 89 residues long: Small ribosomal subunit protein uS15 (89 aa).

This sequence belongs to the universal ribosomal protein uS15 family. As to quaternary structure, part of the 30S ribosomal subunit. Forms a bridge to the 50S subunit in the 70S ribosome, contacting the 23S rRNA.

Functionally, one of the primary rRNA binding proteins, it binds directly to 16S rRNA where it helps nucleate assembly of the platform of the 30S subunit by binding and bridging several RNA helices of the 16S rRNA. In terms of biological role, forms an intersubunit bridge (bridge B4) with the 23S rRNA of the 50S subunit in the ribosome. This chain is Small ribosomal subunit protein uS15, found in Shewanella sediminis (strain HAW-EB3).